Here is a 262-residue protein sequence, read N- to C-terminus: Orotidine 5'-phosphate decarboxylase (262 aa).

Substrate contacts are provided by residues Asp-35, 57 to 59, 89 to 98, Tyr-215, and Arg-233; these read KTH and DRKFADIGNT. The active-site Proton donor is Lys-91.

The protein belongs to the OMP decarboxylase family.

The catalysed reaction is orotidine 5'-phosphate + H(+) = UMP + CO2. It functions in the pathway pyrimidine metabolism; UMP biosynthesis via de novo pathway; UMP from orotate: step 2/2. The protein is Orotidine 5'-phosphate decarboxylase (URA3) of Pichia kudriavzevii (Yeast).